Here is an 862-residue protein sequence, read N- to C-terminus: Chaperone protein ClpB 1 (862 aa).

The region spanning 5 to 147 (AEQFTEQAWA…KEAITAVRGN (143 aa)) is the Clp R domain. 2 repeat regions span residues 8–72 (FTEQ…LQRL) and 84–147 (LGRS…VRGN). The segment at 160 to 341 (ESLAKYGRDL…RRFQQVLVDQ (182 aa)) is NBD1. ATP is bound at residue 207-214 (GEPGVGKT). The segment at 342-550 (PTVPDTISIL…IAEVIAKWTG (209 aa)) is linker. Residues 392–526 (IDLVDESAAR…QEDLLEDEDG (135 aa)) are a coiled coil. An NBD2 region spans residues 560–771 (EMEKLLQLED…RLDDQIIFRS (212 aa)). Residue 610–617 (GPTGVGKT) coordinates ATP. Residues 772 to 862 (LEKEELRRIV…DAGDDKLSIS (91 aa)) form a C-terminal region.

Belongs to the ClpA/ClpB family. In terms of assembly, homohexamer. The oligomerization is ATP-dependent.

It is found in the cytoplasm. Functionally, part of a stress-induced multi-chaperone system, it is involved in the recovery of the cell from heat-induced damage, in cooperation with DnaK, DnaJ and GrpE. Acts before DnaK, in the processing of protein aggregates. Protein binding stimulates the ATPase activity; ATP hydrolysis unfolds the denatured protein aggregates, which probably helps expose new hydrophobic binding sites on the surface of ClpB-bound aggregates, contributing to the solubilization and refolding of denatured protein aggregates by DnaK. The polypeptide is Chaperone protein ClpB 1 (clpB1) (Parasynechococcus marenigrum (strain WH8102)).